A 150-amino-acid chain; its full sequence is Histone H2B.2 (150 aa).

Composition is skewed to basic and acidic residues over residues 1-21 (MAPK…KAGE) and 33-49 (EKRL…EGKK). Residues 1-58 (MAPKAEKKPAEKKPAEEKAGEKAPAAGKKPKAEKRLPASKGEKGGEGKKERGRKKAKK) form a disordered region. K7 and K34 each carry N6-acetyllysine. K146 is covalently cross-linked (Glycyl lysine isopeptide (Lys-Gly) (interchain with G-Cter in ubiquitin)).

The protein belongs to the histone H2B family. In terms of assembly, the nucleosome is a histone octamer containing two molecules each of H2A, H2B, H3 and H4 assembled in one H3-H4 heterotetramer and two H2A-H2B heterodimers. The octamer wraps approximately 147 bp of DNA. Post-translationally, can be acetylated to form H2BK6ac and H2BK33ac. In terms of processing, monoubiquitinated by BRE1 to form H2BK143ub1 and deubiquitinated by UBP26. Required for heterochromatic histone H3 di- and trimethylation at H3K4me. May give a specific tag for epigenetic transcriptional activation.

It is found in the nucleus. The protein resides in the chromosome. In terms of biological role, core component of nucleosome. Nucleosomes wrap and compact DNA into chromatin, limiting DNA accessibility to the cellular machineries which require DNA as a template. Histones thereby play a central role in transcription regulation, DNA repair, DNA replication and chromosomal stability. DNA accessibility is regulated via a complex set of post-translational modifications of histones, also called histone code, and nucleosome remodeling. This chain is Histone H2B.2 (H2B.2), found in Oryza sativa subsp. indica (Rice).